A 334-amino-acid polypeptide reads, in one-letter code: S-adenosylmethionine decarboxylase proenzyme 2 (334 aa).

Residue Phe-7 participates in substrate binding. Residues Glu-8 and Glu-11 contribute to the active site. Glu-67 serves as a coordination point for substrate. The active-site Schiff-base intermediate with substrate; via pyruvic acid is Ser-68. Ser-68 is subject to Pyruvic acid (Ser); by autocatalysis. The active-site Proton donor; for catalytic activity is Cys-82. Phe-223 lines the substrate pocket. Active-site proton acceptor; for processing activity residues include Ser-229 and His-243. Position 247 (Glu-247) interacts with substrate. Ser-298 is modified (phosphoserine).

The protein belongs to the eukaryotic AdoMetDC family. In terms of assembly, heterotetramer of two alpha and two beta chains. It depends on pyruvate as a cofactor. Post-translationally, is synthesized initially as an inactive proenzyme. Formation of the active enzyme involves a self-maturation process in which the active site pyruvoyl group is generated from an internal serine residue via an autocatalytic post-translational modification. Two non-identical subunits are generated from the proenzyme in this reaction, and the pyruvate is formed at the N-terminus of the alpha chain, which is derived from the carboxyl end of the proenzyme. The post-translation cleavage follows an unusual pathway, termed non-hydrolytic serinolysis, in which the side chain hydroxyl group of the serine supplies its oxygen atom to form the C-terminus of the beta chain, while the remainder of the serine residue undergoes an oxidative deamination to produce ammonia and the pyruvoyl group blocking the N-terminus of the alpha chain.

The enzyme catalyses S-adenosyl-L-methionine + H(+) = S-adenosyl 3-(methylsulfanyl)propylamine + CO2. The protein operates within amine and polyamine biosynthesis; S-adenosylmethioninamine biosynthesis; S-adenosylmethioninamine from S-adenosyl-L-methionine: step 1/1. In terms of biological role, essential for biosynthesis of the polyamines spermidine and spermine. Promotes maintenance and self-renewal of embryonic stem cells, by maintaining spermine levels. This chain is S-adenosylmethionine decarboxylase proenzyme 2 (Amd2), found in Mus spretus (Western Mediterranean mouse).